The sequence spans 320 residues: Probable protein adenylyltransferase aq_aa38 (320 aa).

A Fido domain is found at 76–206 (VSEALILWIY…AIVVVEKLSR (131 aa)). Residues 100–101 (KS), 157–159 (GNG), and Arg163 each bind ATP.

This sequence belongs to the fic family.

The catalysed reaction is L-tyrosyl-[protein] + ATP = O-(5'-adenylyl)-L-tyrosyl-[protein] + diphosphate. It carries out the reaction L-threonyl-[protein] + ATP = 3-O-(5'-adenylyl)-L-threonyl-[protein] + diphosphate. Its function is as follows. Probable adenylyltransferase that mediates the addition of adenosine 5'-monophosphate (AMP) to specific residues of target proteins. The sequence is that of Probable protein adenylyltransferase aq_aa38 from Aquifex aeolicus (strain VF5).